Consider the following 607-residue polypeptide: BTB/POZ domain-containing protein DOT3 (607 aa).

The 70-residue stretch at Thr-52–Pro-121 folds into the BTB domain. An NPH3 domain is found at Arg-211 to Ser-487. Tyr-428 is subject to Phosphotyrosine. Disordered stretches follow at residues Asp-498–Asn-520 and Lys-573–Ser-607. Basic and acidic residues-rich tracts occupy residues Lys-499–Asn-520 and Thr-577–Glu-586. Residues Arg-511–Asn-563 are a coiled coil.

Belongs to the NPH3 family. As to expression, expressed in emerging leaf primordia.

Its pathway is protein modification; protein ubiquitination. In terms of biological role, may act as a substrate-specific adapter of an E3 ubiquitin-protein ligase complex (CUL3-RBX1-BTB) which mediates the ubiquitination and subsequent proteasomal degradation of target proteins. Involved in leaf vasculature patterning. This chain is BTB/POZ domain-containing protein DOT3, found in Arabidopsis thaliana (Mouse-ear cress).